We begin with the raw amino-acid sequence, 1406 residues long: Carboxypeptidase D (1406 aa).

The first 25 residues, 1–25 (MPTLGLLFASIGIAVLAMGVPHCRG), serve as a signal peptide directing secretion. The Extracellular segment spans residues 26-1312 (YTIKEDESFL…VNEHVFGLPR (1287 aa)). Peptidase M14 domains lie at 39 to 335 (HYAS…LRQA) and 455 to 760 (EHHN…IEQV). Residues H101 and E104 each contribute to the Zn(2+) site. The N-linked (GlcNAc...) asparagine glycan is linked to N133. 3 cysteine pairs are disulfide-bonded: C156/C309, C236/C237, and C268/C308. H217 is a Zn(2+) binding site. The N-linked (GlcNAc...) asparagine glycan is linked to N269. Residue E305 is the Proton donor/acceptor of the active site. N458 carries an N-linked (GlcNAc...) asparagine glycan. Residues H517 and E520 each coordinate Zn(2+). N-linked (GlcNAc...) asparagine glycosylation is found at N549 and N612. Residue H626 participates in Zn(2+) binding. Residue N652 is glycosylated (N-linked (GlcNAc...) asparagine). E730 acts as the Proton donor/acceptor in catalysis. Residues N787, N808, N981, N1152, and N1251 are each glycosylated (N-linked (GlcNAc...) asparagine). The 259-residue stretch at 863–1121 (RYHTNPQVRA…DKIKNFLALV (259 aa)) folds into the Peptidase M14 3 domain. The chain crosses the membrane as a helical span at residues 1313–1333 (FLFILCASVLIIVGVIVCVLC). Topologically, residues 1334-1406 (AQFWFYRRHR…TNYSFIIQAA (73 aa)) are cytoplasmic. The short motif at 1343–1345 (RGD) is the Cell attachment site element. Position 1380 is a phosphoserine (S1380).

Belongs to the peptidase M14 family. In terms of assembly, monomer. Requires Zn(2+) as cofactor. In terms of tissue distribution, expressed in the central nervous system (CNS) of adults and larvae. In the adult brain, increased levels of expression in the mushroom body (MB) and neurosecretory cells.

It localises to the membrane. The protein resides in the cytoplasm. It is found in the perinuclear region. The protein localises to the golgi apparatus. Its subcellular location is the trans-Golgi network. It localises to the secreted. The enzyme catalyses Releases C-terminal Arg and Lys from polypeptides.. Inhibited by 2-guanidinoethylmercaptosuccinic acid (GEMSA). Metallocarboxypeptidase that catalyzes the release of C-terminal arginine or lysine residues from peptides and proteins. Functionally important for processing a broad range of proteins including growth factors, peptide hormones (such as Akh) and neuropeptides. Consequently, it is involved in a wide range of processes including viability, memory formation, locomotive activity, wing formation, and peptide-regulated behaviors such as starvation-induced hyperactivity, appetitive gustatory preference, and cold and ethanol sensitivity. Key enzyme in neuropeptide processing. Involved in regulation of memory formation, possibly via the insulin pathway in neurosecretory cells. The chain is Carboxypeptidase D from Drosophila melanogaster (Fruit fly).